Consider the following 459-residue polypeptide: MMTKNEIQKWVKEFPLLKTIMAAEEVFWRNPKYHAFAQAIRTIPLRERDVKEAEERLRRFAPYIAKAFPETRTAHGIIESPLVRISNMKQRLEKMFQTNIEGELLLKCDSHLPISGSIKARGGIYEVLKHAEDLALANGMITIGDDYAVMDSEKFRQFFSRYSLVVGSTGNLGLSIGIIGAKLGFRVTVHMSADAKQWKKDLLRSKGVTVIEHLTDYNKVVEEARRQSAEDPTSYFIDDENSIHLFLGYAVAAFRLKKQLEDMNITVDENHPLFVYLPCGVGGGPGGVTFGLKLVYGDHVHCFFAEPTHSPCMLLGLMTGEHDRVSVQDFGLDNKTEADGLAVGRPSRLVGNMLENVISGVYTVDDSTLYRLLAAMVETEEIYLEPSALAGVAGPVRLFRDLAGQTYVEANGLKEKMKNATHIGWATGGSMVPKDVMEAYYREGVRIETMTGNGFSEGR.

Lysine 119 is subject to N6-(pyridoxal phosphate)lysine.

The protein belongs to the serine/threonine dehydratase family. DsdA subfamily. It depends on pyridoxal 5'-phosphate as a cofactor.

It carries out the reaction D-serine = pyruvate + NH4(+). The protein is Probable D-serine dehydratase of Geobacillus stearothermophilus (Bacillus stearothermophilus).